Here is a 124-residue protein sequence, read N- to C-terminus: Holo-[acyl-carrier-protein] synthase (124 aa).

Asp-7 and Glu-55 together coordinate Mg(2+).

The protein belongs to the P-Pant transferase superfamily. AcpS family. The cofactor is Mg(2+).

It is found in the cytoplasm. It catalyses the reaction apo-[ACP] + CoA = holo-[ACP] + adenosine 3',5'-bisphosphate + H(+). Transfers the 4'-phosphopantetheine moiety from coenzyme A to a Ser of acyl-carrier-protein. The protein is Holo-[acyl-carrier-protein] synthase of Borrelia garinii subsp. bavariensis (strain ATCC BAA-2496 / DSM 23469 / PBi) (Borreliella bavariensis).